We begin with the raw amino-acid sequence, 143 residues long: Large ribosomal subunit protein uL11 (143 aa).

The protein belongs to the universal ribosomal protein uL11 family. Part of the ribosomal stalk of the 50S ribosomal subunit. Interacts with L10 and the large rRNA to form the base of the stalk. L10 forms an elongated spine to which L12 dimers bind in a sequential fashion forming a multimeric L10(L12)X complex. Post-translationally, one or more lysine residues are methylated.

Functionally, forms part of the ribosomal stalk which helps the ribosome interact with GTP-bound translation factors. The sequence is that of Large ribosomal subunit protein uL11 from Paraburkholderia xenovorans (strain LB400).